Here is a 72-residue protein sequence, read N- to C-terminus: Translation initiation factor IF-1 (72 aa).

In terms of domain architecture, S1-like spans 1-72 (MSKDDVIEMQ…SRGRITWRAK (72 aa)).

It belongs to the IF-1 family. In terms of assembly, component of the 30S ribosomal translation pre-initiation complex which assembles on the 30S ribosome in the order IF-2 and IF-3, IF-1 and N-formylmethionyl-tRNA(fMet); mRNA recruitment can occur at any time during PIC assembly.

Its subcellular location is the cytoplasm. Functionally, one of the essential components for the initiation of protein synthesis. Stabilizes the binding of IF-2 and IF-3 on the 30S subunit to which N-formylmethionyl-tRNA(fMet) subsequently binds. Helps modulate mRNA selection, yielding the 30S pre-initiation complex (PIC). Upon addition of the 50S ribosomal subunit IF-1, IF-2 and IF-3 are released leaving the mature 70S translation initiation complex. This chain is Translation initiation factor IF-1, found in Clostridium novyi (strain NT).